Reading from the N-terminus, the 2339-residue chain is DNA-directed RNA polymerase III subunit RPC1 (2339 aa).

Cys-88, Cys-91, Cys-98, His-101, Cys-128, Cys-131, and Cys-175 together coordinate Zn(2+). Mg(2+) is bound by residues Asp-611, Asp-613, and Asp-615. Residues Pro-955–Glu-967 form a bridging helix region. Disordered regions lie at residues Glu-1503–Tyr-1557 and Leu-2038–Arg-2079. Over residues Pro-1509–Asn-1520 the composition is skewed to basic and acidic residues. Low complexity predominate over residues Tyr-1521–Tyr-1557. Residues Leu-2038–Asn-2047 are compositionally biased toward basic and acidic residues. Low complexity predominate over residues Asp-2049–Asn-2059.

It belongs to the RNA polymerase beta' chain family. As to quaternary structure, component of the RNA polymerase III (Pol III) complex consisting of 17 subunits.

Its subcellular location is the nucleus. It catalyses the reaction RNA(n) + a ribonucleoside 5'-triphosphate = RNA(n+1) + diphosphate. Its function is as follows. DNA-dependent RNA polymerase catalyzes the transcription of DNA into RNA using the four ribonucleoside triphosphates as substrates. Largest and catalytic core component of RNA polymerase III which synthesizes small RNAs, such as 5S rRNA and tRNAs. Forms the polymerase active center together with the second largest subunit. A single-stranded DNA template strand of the promoter is positioned within the central active site cleft of Pol III. A bridging helix emanates from RPC1 and crosses the cleft near the catalytic site and is thought to promote translocation of Pol III by acting as a ratchet that moves the RNA-DNA hybrid through the active site by switching from straight to bent conformations at each step of nucleotide addition. The sequence is that of DNA-directed RNA polymerase III subunit RPC1 from Plasmodium falciparum.